The sequence spans 295 residues: Zinc finger transcription factor pqm-1 (295 aa).

A disordered region spans residues 1 to 23 (MSFLNNDFGSPPATSSPPTTMPK). Residues 10–22 (SPPATSSPPTTMP) show a composition bias toward low complexity. The segment at 161–183 (YMCTVCRKVYGRYNSVSYHVTIY) adopts a C2H2-type 1; degenerate zinc-finger fold. A C2H2-type 2 zinc finger spans residues 227-249 (RKCPHCRHVSKSPAMLEKHIRRH).

The protein belongs to the krueppel C2H2-type zinc-finger protein family. Interacts with ceh-60.

It is found in the chromosome. The protein resides in the nucleus. The protein localises to the cytoplasm. Zinc finger transcription factor which acts as both a transcriptional activator and repressor. Binds to the promoters of genes that contain the 5'-CTTATCA-3' DNA consensus sequence in their regulatory region. Functions downstream of the Insulin/IGF-1-like signaling (IIS) mediated pathway. Involved in normal development, lifespan, stress response, lipid metabolism, innate immunity and exit from the developmentally arrested larval state known as dauer. Required for stress-induced expression of hsp-90 and resistance to heat stress, perhaps as part of a systemic stress signaling pathway. Involved in maintenance of proteostasis. Under hypoxic stress increases lipid levels by positively regulating fatty acid synthesis via fat-7 expression. Associates with homeobox protein ceh-60 at the promoters of some stress-responsive genes to regulate expression; may require phosphorylation for transcriptional repression activity. Acts downstream of nhr-14 to activate transcription of intestinal metal transporter smf-3, modulating innate immunity and iron uptake. May act downstream of the mTORC2 signaling mediated pathway. May act in a mutually exclusive manner with the FOXO transcription factor daf-16. This chain is Zinc finger transcription factor pqm-1, found in Caenorhabditis elegans.